Consider the following 166-residue polypeptide: Putative membrane protein 162 (166 aa).

A topological domain (intravirion) is located at residue methionine 1. A helical transmembrane segment spans residues 2-22 (YYPAVQVLIGIILVDNFNTEF). Residues 23 to 166 (LSSEKKNCKT…TIMGIARNIL (144 aa)) are Virion surface-facing.

This sequence belongs to the asfivirus envelope protein p22 family.

The protein localises to the virion membrane. It localises to the host cell membrane. The polypeptide is Putative membrane protein 162 (African swine fever virus (isolate Tick/Malawi/Lil 20-1/1983) (ASFV)).